A 180-amino-acid polypeptide reads, in one-letter code: Large ribosomal subunit protein uL5 (180 aa).

The protein belongs to the universal ribosomal protein uL5 family. Part of the 50S ribosomal subunit; part of the 5S rRNA/L5/L18/L25 subcomplex. Contacts the 5S rRNA and the P site tRNA. Forms a bridge to the 30S subunit in the 70S ribosome.

Functionally, this is one of the proteins that bind and probably mediate the attachment of the 5S RNA into the large ribosomal subunit, where it forms part of the central protuberance. In the 70S ribosome it contacts protein S13 of the 30S subunit (bridge B1b), connecting the 2 subunits; this bridge is implicated in subunit movement. Contacts the P site tRNA; the 5S rRNA and some of its associated proteins might help stabilize positioning of ribosome-bound tRNAs. This chain is Large ribosomal subunit protein uL5, found in Clostridium acetobutylicum (strain ATCC 824 / DSM 792 / JCM 1419 / IAM 19013 / LMG 5710 / NBRC 13948 / NRRL B-527 / VKM B-1787 / 2291 / W).